The following is a 142-amino-acid chain: Ctenidin-3 (142 aa).

Positions 1–19 (MKHLIPLIVMASVVLAVYA) are cleaved as a signal peptide. Tyrosine 139 carries the tyrosine amide modification.

Expressed in hemocytes (at protein level).

It is found in the secreted. Its function is as follows. Antimicrobial protein with bacteriostatic activity against the Gram-negative bacterium E.coli, and very weak activity against the Gram-positive bacterium S.aureus. Lacks activity against the yeast C.albicans. The protein is Ctenidin-3 of Cupiennius salei (American wandering spider).